Here is a 327-residue protein sequence, read N- to C-terminus: MVSKKDKQIHSDHNPQDASPVEWAEIRHKLLAFQENIQSGSDIDARSDDPQMCGLYVSDIYEYLRELEVKPKLRPLHDYIEKIQEDITPSKRGVLVDWLVEVAEEFELVSETLYLTVSYIDRFLSLKMVNEHWLQLVGVSAMFIASKYEEKRRPKVEDFCYITANTYTKQDVLKMEEDILLALEFELGRPTTNTFLRRFIRVAQEDFKVPNLQLEPLCCYLSELSMLDYSCVKFVPSLLAASAVFLARFIILPNQHPWSQMLEECTKYKAADLQVCVEIMLDLYLSRSEGASKAVREKYKQHKFQYVAAIPVYQELPVTFWEDVVTI.

Belongs to the cyclin family. Cyclin AB subfamily.

The chain is Cyclin-A3-3 (CYCA3-3) from Arabidopsis thaliana (Mouse-ear cress).